The following is a 455-amino-acid chain: Probable alpha-galactosidase B (455 aa).

The N-terminal stretch at 1–16 is a signal peptide; it reads MIEFLALITLISRANA. Disulfide bonds link Cys39-Cys71 and Cys121-Cys151. Asn42 carries an N-linked (GlcNAc...) asparagine glycan. The Nucleophile role is filled by Asp149. 2 N-linked (GlcNAc...) asparagine glycosylation sites follow: Asn177 and Asn192. Substrate is bound at residue 222-226; sequence NWGNA. Asp244 serves as the catalytic Proton donor. Asn395 is a glycosylation site (N-linked (GlcNAc...) asparagine).

This sequence belongs to the glycosyl hydrolase 27 family.

It localises to the secreted. It catalyses the reaction Hydrolysis of terminal, non-reducing alpha-D-galactose residues in alpha-D-galactosides, including galactose oligosaccharides, galactomannans and galactolipids.. Functionally, hydrolyzes a variety of simple alpha-D-galactoside as well as more complex molecules such as oligosaccharides and polysaccharides. This chain is Probable alpha-galactosidase B (aglB), found in Emericella nidulans (strain FGSC A4 / ATCC 38163 / CBS 112.46 / NRRL 194 / M139) (Aspergillus nidulans).